A 385-amino-acid chain; its full sequence is Heptahelical transmembrane protein 4 (385 aa).

The segment covering 1–12 (MGDEAEIKEHLK) has biased composition (basic and acidic residues). Residues 1-22 (MGDEAEIKEHLKPQASSETMDK) form a disordered region. Residues 1–79 (MGDEAEIKEH…LSIFTIHNET (79 aa)) are Cytoplasmic-facing. A helical membrane pass occupies residues 80–100 (LNVWTHLIGFFLFLALTIYTA). At 101 to 191 (TKVPSVVDLH…LIFRPITRWP (91 aa)) the chain is on the extracellular side. A helical membrane pass occupies residues 192–212 (FYAFLGGAMFCLLASSTCHLL). Over 213–228 (SCHSERVSYIMLRLDY) the chain is Cytoplasmic. Residues 229–249 (AGIAALIATSFYPPVYYSFMC) form a helical membrane-spanning segment. The Extracellular portion of the chain corresponds to 250 to 256 (DPFFCNL). The helical transmembrane segment at 257-277 (YLGFITILGIATVLVSLLPVF) threads the bilayer. At 278 to 288 (QSPEFRVVRAS) the chain is on the cytoplasmic side. The chain crosses the membrane as a helical span at residues 289–309 (LFFGMGFSGLAPILHKLIIFW). At 310–313 (DQPE) the chain is on the extracellular side. The helical transmembrane segment at 314 to 334 (ALHTTGYEILMGLLYGLGALV) threads the bilayer. Residues 335–356 (YATRIPERWMPGKFDIAGHSHQ) lie on the Cytoplasmic side of the membrane. Residues 357-377 (LFHVLVVAGAFTHYRAGLVYL) form a helical membrane-spanning segment.

Belongs to the ADIPOR family. As to expression, expressed in roots, leaves, stems and flowers.

The protein resides in the membrane. Functionally, may play a role in abiotic stress response. The protein is Heptahelical transmembrane protein 4 (HHP4) of Arabidopsis thaliana (Mouse-ear cress).